Consider the following 40-residue polypeptide: U12-ctenitoxin-Co1a (40 aa).

4 cysteine pairs are disulfide-bonded: cysteine 2–cysteine 16, cysteine 9–cysteine 22, cysteine 15–cysteine 31, and cysteine 24–cysteine 29.

Expressed by the venom gland.

It localises to the secreted. In terms of biological role, insecticidal neurotoxin that reversibly inhibits the N-methyl-D-aspartate (NMDA)-subtype of ionotropic glutamate receptor (GRIN) and inhibits inactivation of insect sodium channels (Nav). In vivo, is highly toxic to insects. This is U12-ctenitoxin-Co1a from Ctenus ornatus (Brazilian spider).